The following is a 311-amino-acid chain: Methionyl-tRNA formyltransferase (311 aa).

Position 112–115 (112–115 (SLLP)) interacts with (6S)-5,6,7,8-tetrahydrofolate.

This sequence belongs to the Fmt family.

It carries out the reaction L-methionyl-tRNA(fMet) + (6R)-10-formyltetrahydrofolate = N-formyl-L-methionyl-tRNA(fMet) + (6S)-5,6,7,8-tetrahydrofolate + H(+). Attaches a formyl group to the free amino group of methionyl-tRNA(fMet). The formyl group appears to play a dual role in the initiator identity of N-formylmethionyl-tRNA by promoting its recognition by IF2 and preventing the misappropriation of this tRNA by the elongation apparatus. This Bradyrhizobium sp. (strain BTAi1 / ATCC BAA-1182) protein is Methionyl-tRNA formyltransferase.